Reading from the N-terminus, the 463-residue chain is Cysteine--tRNA ligase (463 aa).

Cysteine 29 serves as a coordination point for Zn(2+). Positions 31 to 41 (MTIYDLCHIGH) match the 'HIGH' region motif. Positions 218, 243, and 247 each coordinate Zn(2+). The short motif at 275 to 279 (KMSKS) is the 'KMSKS' region element. Lysine 278 serves as a coordination point for ATP.

This sequence belongs to the class-I aminoacyl-tRNA synthetase family. As to quaternary structure, monomer. The cofactor is Zn(2+).

It localises to the cytoplasm. The enzyme catalyses tRNA(Cys) + L-cysteine + ATP = L-cysteinyl-tRNA(Cys) + AMP + diphosphate. This chain is Cysteine--tRNA ligase, found in Polaromonas naphthalenivorans (strain CJ2).